A 300-amino-acid polypeptide reads, in one-letter code: Inosose dehydratase (300 aa).

This sequence belongs to the IolE/MocC family. Requires glutathione as cofactor. Co(2+) serves as cofactor. The cofactor is Mn(2+).

It catalyses the reaction scyllo-inosose = 3D-3,5/4-trihydroxycyclohexane-1,2-dione + H2O. Functionally, catalyzes the dehydration of inosose (2-keto-myo-inositol, 2KMI or 2,4,6/3,5-pentahydroxycyclohexanone) to 3D-(3,5/4)-trihydroxycyclohexane-1,2-dione (D-2,3-diketo-4-deoxy-epi-inositol). In Mesomycoplasma hyopneumoniae (strain J / ATCC 25934 / NCTC 10110) (Mycoplasma hyopneumoniae), this protein is Inosose dehydratase.